The primary structure comprises 207 residues: Large ribosomal subunit protein bL25 (207 aa).

Residues 1-20 are disordered; that stretch reads MANHQIKAQRRKDEGKGASR.

It belongs to the bacterial ribosomal protein bL25 family. CTC subfamily. In terms of assembly, part of the 50S ribosomal subunit; part of the 5S rRNA/L5/L18/L25 subcomplex. Contacts the 5S rRNA. Binds to the 5S rRNA independently of L5 and L18.

Its function is as follows. This is one of the proteins that binds to the 5S RNA in the ribosome where it forms part of the central protuberance. The polypeptide is Large ribosomal subunit protein bL25 (Xylella fastidiosa (strain M12)).